The following is a 198-amino-acid chain: Glycerol-3-phosphate acyltransferase (198 aa).

Helical transmembrane passes span 4–24 (TYLLFIVAYLLGSIPFALVVG), 71–91 (LPMIFGLDIHPLWFGLAAVLG), 113–133 (LLCYSPVVFAILAVVFFTLLF), and 147–167 (VVAVIASIVSGDKIFIIAMCL).

It belongs to the PlsY family. In terms of assembly, probably interacts with PlsX.

Its subcellular location is the cell membrane. It catalyses the reaction an acyl phosphate + sn-glycerol 3-phosphate = a 1-acyl-sn-glycero-3-phosphate + phosphate. The protein operates within lipid metabolism; phospholipid metabolism. Functionally, catalyzes the transfer of an acyl group from acyl-phosphate (acyl-PO(4)) to glycerol-3-phosphate (G3P) to form lysophosphatidic acid (LPA). This enzyme utilizes acyl-phosphate as fatty acyl donor, but not acyl-CoA or acyl-ACP. The sequence is that of Glycerol-3-phosphate acyltransferase from Bacillus cereus (strain G9842).